The following is a 385-amino-acid chain: Pepsin A (385 aa).

An N-terminal signal peptide occupies residues methionine 1–cysteine 15. A propeptide spans leucine 16 to leucine 59 (activation peptide). The Peptidase A1 domain occupies tyrosine 73–alanine 382. The active site involves aspartate 91. An intrachain disulfide couples cysteine 104 to cysteine 109. Serine 127 is modified (phosphoserine). Cysteine 265 and cysteine 269 are disulfide-bonded. Residue aspartate 274 is part of the active site. Cysteines 308 and 341 form a disulfide.

Belongs to the peptidase A1 family. In terms of processing, minor amounts of the active enzyme occur with 'Ala-58' at the amino end.

It is found in the secreted. The enzyme catalyses Preferential cleavage: hydrophobic, preferably aromatic, residues in P1 and P1' positions. Cleaves 1-Phe-|-Val-2, 4-Gln-|-His-5, 13-Glu-|-Ala-14, 14-Ala-|-Leu-15, 15-Leu-|-Tyr-16, 16-Tyr-|-Leu-17, 23-Gly-|-Phe-24, 24-Phe-|-Phe-25 and 25-Phe-|-Tyr-26 bonds in the B chain of insulin.. Its function is as follows. Shows particularly broad specificity; although bonds involving phenylalanine and leucine are preferred, many others are also cleaved to some extent. The polypeptide is Pepsin A (PGA) (Sus scrofa (Pig)).